Here is a 287-residue protein sequence, read N- to C-terminus: Toxin zeta (287 aa).

Position 40-47 (40-47 (GQPGSGKT)) interacts with ATP. Asn-66 serves as a coordination point for substrate. Asp-67 functions as the Proton acceptor in the catalytic mechanism. Residues Glu-100, Thr-118, Arg-120, and Thr-128 each contribute to the substrate site. A disordered region spans residues 267–287 (KLESLQPPTPPIPKTPKLPGI). Residues 273 to 287 (PPTPPIPKTPKLPGI) are compositionally biased toward pro residues.

This sequence belongs to the zeta toxin family. In the presence of the epsilon antitoxin forms an inactive PezA(2)PezT(2) heterotetramer. The heterotetramer is still able to bind the UNAG substrate.

It catalyses the reaction UDP-N-acetyl-alpha-D-glucosamine + ATP = UDP-N-acetyl-alpha-D-glucosamine 3'-phosphate + ADP + H(+). In terms of biological role, toxic component of a type II toxin-antitoxin (TA) system. Phosphorylates UDP-N-acetyl-D-glucosamine (UNAG) on the 3'-hydroxyl group of the N-acetyl-D-glucosamine moiety, yielding UNAG-3P. UNAG-3P inhibits MurA, the first committed step in cell wall synthesis, which is then blocked. Phosphorylation is inhibited by cognate epsilon antitoxin. Part of a postsegregational killing (PSK) system involved in the killing of plasmid-free cells. The zeta toxin induces programmed cell death. This chain is Toxin zeta, found in Streptococcus pyogenes.